The chain runs to 319 residues: Cobalamin biosynthesis protein CbiB (319 aa).

Helical transmembrane passes span 52 to 74, 79 to 101, 155 to 177, 207 to 229, and 296 to 318; these read IGGG…GVLA, IHPW…GRSL, GIIA…YKAV, YLPA…LSGW, and LMWV…LSGV.

The protein belongs to the CobD/CbiB family.

The protein localises to the cell membrane. It participates in cofactor biosynthesis; adenosylcobalamin biosynthesis; adenosylcobalamin from cob(II)yrinate a,c-diamide: step 4/7. Its function is as follows. Converts cobyric acid to cobinamide by the addition of aminopropanol on the F carboxylic group. However, the true cosubstrate could be (R)-1-amino-2-propanol O-2-phosphate, leading to cobinamide phosphate. This Salmonella typhi protein is Cobalamin biosynthesis protein CbiB.